Reading from the N-terminus, the 537-residue chain is Tyrosine-protein kinase Fyn (537 aa).

Gly2 carries the N-myristoyl glycine lipid modification. S-palmitoyl cysteine attachment occurs at residues Cys3 and Cys6. Thr12 is modified (phosphothreonine; by PKC). A disordered region spans residues 14–35 (LTEERDGSLNQSSGYRYGTDPT). A phosphoserine mark is found at Ser21 and Ser26. The 62-residue stretch at 82–143 (TGVTLFVALY…PSNYVAPVDS (62 aa)) folds into the SH3 domain. One can recognise an SH2 domain in the interval 149–246 (WYFGKLGRKD…GLCCRLVVPC (98 aa)). Tyr185 is modified (phosphotyrosine). Residues 271–524 (LQLIKRLGNG…YLQGFLEDYF (254 aa)) enclose the Protein kinase domain. ATP-binding positions include 277–285 (LGNGQFGEV) and Lys299. Residue Asp390 is the Proton acceptor of the active site. A Phosphotyrosine; by autocatalysis modification is found at Tyr420. Tyr531 is subject to Phosphotyrosine; by CSK.

This sequence belongs to the protein kinase superfamily. Tyr protein kinase family. SRC subfamily. As to quaternary structure, interacts (via its SH3 domain) with PIK3R1 and PRMT8. Interacts with FYB1, PAG1, and SH2D1A. Interacts with CD79A (tyrosine-phosphorylated form); the interaction increases FYN activity. Interacts (via SH2 domain) with CSF1R (tyrosine phosphorylated). Interacts with TOM1L1 (phosphorylated form). Interacts with KDR (tyrosine phosphorylated). Interacts (via SH3 domain) with KLHL2 (via N-terminus). Interacts with SH2D1A and SLAMF1. Interacts with ITCH; the interaction phosphorylates ITCH and negatively regulates its activity. Interacts with FASLG. Interacts with RUNX3. Interacts with KIT. Interacts with EPHA8; possible downstream effector of EPHA8 in regulation of cell adhesion. Interacts with PTK2/FAK1; this interaction leads to PTK2/FAK1 phosphorylation and activation. Interacts with CAV1; this interaction couples integrins to the Ras-ERK pathway. Interacts with UNC119. Interacts (via SH2 domain) with PTPRH (phosphorylated form). Interacts with PTPRO (phosphorylated form). Interacts with PTPRB (phosphorylated form). Interacts with FYB2. Interacts with DSCAM. Interacts with SKAP1 and FYB1; this interaction promotes the phosphorylation of CLNK. Interacts with NEDD9; in the presence of PTK2. Requires Mn(2+) as cofactor. Post-translationally, autophosphorylated at Tyr-420. Phosphorylation on the C-terminal tail at Tyr-531 by CSK maintains the enzyme in an inactive state. PTPRC/CD45 dephosphorylates Tyr-531 leading to activation. Ultraviolet B (UVB) strongly increase phosphorylation at Thr-12 and kinase activity, and promotes translocation from the cytoplasm to the nucleus. Dephosphorylation at Tyr-420 by PTPN2 negatively regulates T-cell receptor signaling. Phosphorylated at tyrosine residues, which can be enhanced by NTN1. In terms of processing, palmitoylated. Palmitoylation at Cys-3 and Cys-6, probably by ZDHHC21, regulates subcellular location.

Its subcellular location is the cytoplasm. The protein localises to the nucleus. It is found in the cell membrane. It localises to the perikaryon. The catalysed reaction is L-tyrosyl-[protein] + ATP = O-phospho-L-tyrosyl-[protein] + ADP + H(+). With respect to regulation, inhibited by phosphorylation of Tyr-531 by leukocyte common antigen and activated by dephosphorylation of this site. Its function is as follows. Non-receptor tyrosine-protein kinase that plays a role in many biological processes including regulation of cell growth and survival, cell adhesion, integrin-mediated signaling, cytoskeletal remodeling, cell motility, immune response and axon guidance. Inactive FYN is phosphorylated on its C-terminal tail within the catalytic domain. Following activation by PKA, the protein subsequently associates with PTK2/FAK1, allowing PTK2/FAK1 phosphorylation, activation and targeting to focal adhesions. Involved in the regulation of cell adhesion and motility through phosphorylation of CTNNB1 (beta-catenin) and CTNND1 (delta-catenin). Regulates cytoskeletal remodeling by phosphorylating several proteins including the actin regulator WAS and the microtubule-associated proteins MAP2 and MAPT. Promotes cell survival by phosphorylating AGAP2/PIKE-A and preventing its apoptotic cleavage. Participates in signal transduction pathways that regulate the integrity of the glomerular slit diaphragm (an essential part of the glomerular filter of the kidney) by phosphorylating several slit diaphragm components including NPHS1, KIRREL1 and TRPC6. Plays a role in neural processes by phosphorylating DPYSL2, a multifunctional adapter protein within the central nervous system, ARHGAP32, a regulator for Rho family GTPases implicated in various neural functions, and SNCA, a small pre-synaptic protein. Involved in reelin signaling by mediating phosphorylation of DAB1 following reelin (RELN)-binding to its receptor. Participates in the downstream signaling pathways that lead to T-cell differentiation and proliferation following T-cell receptor (TCR) stimulation. Phosphorylates PTK2B/PYK2 in response to T-cell receptor activation. Also participates in negative feedback regulation of TCR signaling through phosphorylation of PAG1, thereby promoting interaction between PAG1 and CSK and recruitment of CSK to lipid rafts. CSK maintains LCK and FYN in an inactive form. Promotes CD28-induced phosphorylation of VAV1. In mast cells, phosphorylates CLNK after activation of immunoglobulin epsilon receptor signaling. Can also promote CD244-mediated NK cell activation. This chain is Tyrosine-protein kinase Fyn, found in Bos taurus (Bovine).